Reading from the N-terminus, the 102-residue chain is UPF0235 protein Swol_0959 (102 aa).

The protein belongs to the UPF0235 family.

The protein is UPF0235 protein Swol_0959 of Syntrophomonas wolfei subsp. wolfei (strain DSM 2245B / Goettingen).